A 512-amino-acid chain; its full sequence is Probable amidase At4g34880 (512 aa).

Active-site charge relay system residues include Lys117 and Ser198. Ser222 serves as the catalytic Acyl-ester intermediate.

This sequence belongs to the amidase family. Expressed in vasculature of roots, cotyledons, leaves and sepals.

It carries out the reaction a monocarboxylic acid amide + H2O = a monocarboxylate + NH4(+). The polypeptide is Probable amidase At4g34880 (Arabidopsis thaliana (Mouse-ear cress)).